A 296-amino-acid chain; its full sequence is Urease accessory protein UreD (296 aa).

Belongs to the UreD family. As to quaternary structure, ureD, UreF and UreG form a complex that acts as a GTP-hydrolysis-dependent molecular chaperone, activating the urease apoprotein by helping to assemble the nickel containing metallocenter of UreC. The UreE protein probably delivers the nickel.

It is found in the cytoplasm. Required for maturation of urease via the functional incorporation of the urease nickel metallocenter. This is Urease accessory protein UreD from Methylibium petroleiphilum (strain ATCC BAA-1232 / LMG 22953 / PM1).